The chain runs to 553 residues: MRSDMIKKGLERTPHRALLKATGIPQSQMERPFIGVATSFTDLIPGHVGMRDLERFIEKGIHSGGGYAQFFGIPGVCDGIAMGHKGMHYSLPTRELIADMVESVAEAHRLDGLVLLTNCDKITPGMLMAAARLNIPCIIVTAGPMMSGRGVEGRAYSFVTDTFEAMARYKAGVIDAKELQVCEDNACPGMGSCQGLFTANTMAILTETLGMSLPRCGTALAVSAMKRRIAFASGEKIVELVHNDVKPRDIMTRAAFENAIRVDLALGGSSNTVLHLLAIAREAGVDLPLETFDILAKETPQLASMNPAGKHFMEDLDIAGGVCGVLKQLGDKIIDTRTLFGLTTRQLAASIENVDQEVIRPLSAPVKKEGGIAVLFGSIAPKGAVVKQSGVSDKMMLFEGTARCFDSEELAMAALMEGVIKAGDVVVIRYEGPKGGPGMREMLAPTAALMGLGLGDSVALITDGRFSGGTRGPCIGHVSPEAAEGGPIALIQDGDRILLDIPNRKLDLLVDGATIEARRAQWTAPEPKIKTGWLARYAKVVTSAYTGAVTTAD.

Asp-78 serves as a coordination point for Mg(2+). [2Fe-2S] cluster is bound at residue Cys-119. Positions 120 and 121 each coordinate Mg(2+). N6-carboxylysine is present on Lys-121. Residue Cys-193 coordinates [2Fe-2S] cluster. Glu-441 serves as a coordination point for Mg(2+). The Proton acceptor role is filled by Ser-467.

Belongs to the IlvD/Edd family. In terms of assembly, homodimer. It depends on [2Fe-2S] cluster as a cofactor. The cofactor is Mg(2+).

It catalyses the reaction (2R)-2,3-dihydroxy-3-methylbutanoate = 3-methyl-2-oxobutanoate + H2O. The enzyme catalyses (2R,3R)-2,3-dihydroxy-3-methylpentanoate = (S)-3-methyl-2-oxopentanoate + H2O. It participates in amino-acid biosynthesis; L-isoleucine biosynthesis; L-isoleucine from 2-oxobutanoate: step 3/4. It functions in the pathway amino-acid biosynthesis; L-valine biosynthesis; L-valine from pyruvate: step 3/4. In terms of biological role, functions in the biosynthesis of branched-chain amino acids. Catalyzes the dehydration of (2R,3R)-2,3-dihydroxy-3-methylpentanoate (2,3-dihydroxy-3-methylvalerate) into 2-oxo-3-methylpentanoate (2-oxo-3-methylvalerate) and of (2R)-2,3-dihydroxy-3-methylbutanoate (2,3-dihydroxyisovalerate) into 2-oxo-3-methylbutanoate (2-oxoisovalerate), the penultimate precursor to L-isoleucine and L-valine, respectively. This chain is Dihydroxy-acid dehydratase, found in Trichlorobacter lovleyi (strain ATCC BAA-1151 / DSM 17278 / SZ) (Geobacter lovleyi).